The chain runs to 180 residues: Stathmin-3 (180 aa).

S-palmitoyl cysteine attachment occurs at residues C22 and C24. In terms of domain architecture, SLD spans 38-180 (GDMEVKQLDK…NKEQREEMSG (143 aa)). S50, S60, S65, S68, S72, S73, and S81 each carry phosphoserine. The disordered stretch occupies residues 59 to 82 (KSPSDLSPESPMLSSPPKKKDTSL). The segment covering 60–74 (SPSDLSPESPMLSSP) has biased composition (low complexity). Positions 75–179 (PKKKDTSLEE…RNKEQREEMS (105 aa)) form a coiled coil.

This sequence belongs to the stathmin family. Interacts with STAT3. Interacts with CLU (secreted form); this interaction may act as an important modulator during neuronal differentiation. N-terminal palmitoylation promotes specific anchoring to the cytosolic leaflet of Golgi membranes and subsequent vesicular trafficking along dendrites and axons. Neuronal Stathmins are substrates for palmitoyltransferases ZDHHC3, ZDHHC7 and ZDHHC15. As to expression, neuron specific.

Its subcellular location is the golgi apparatus. The protein resides in the cell projection. The protein localises to the growth cone. It localises to the axon. It is found in the cytoplasm. Its subcellular location is the cytosol. In terms of biological role, exhibits microtubule-destabilizing activity, which is antagonized by STAT3. The sequence is that of Stathmin-3 (STMN3) from Homo sapiens (Human).